A 334-amino-acid chain; its full sequence is Probable aminoacyl tRNA synthase complex-interacting multifunctional protein 2 (334 aa).

Residues 280–327 (LDKRLQKQQYFGGSQMSVADVGVYSSLIRMPAVTEKDLTPALVAWRKR) enclose the GST C-terminal domain.

Component of the aminoacyl-tRNA synthase complex which is comprised of a bifunctional glutamyl-prolyl-tRNA synthase, the monospecific isoleucyl, leucyl, glutaminyl, methionyl, lysyl, arginyl and aspartyl-tRNA synthases, and three auxiliary proteins.

The protein localises to the cytoplasm. It localises to the cytosol. The protein resides in the nucleus. Its function is as follows. Required for assembly and stability of the aminoacyl-tRNA synthase complex. This is Probable aminoacyl tRNA synthase complex-interacting multifunctional protein 2 from Drosophila melanogaster (Fruit fly).